The following is a 125-amino-acid chain: Phosphoribosyl-AMP cyclohydrolase (125 aa).

Residue aspartate 74 participates in Mg(2+) binding. Cysteine 75 contacts Zn(2+). Positions 76 and 78 each coordinate Mg(2+). The Zn(2+) site is built by cysteine 92 and cysteine 99.

It belongs to the PRA-CH family. As to quaternary structure, homodimer. Requires Mg(2+) as cofactor. Zn(2+) is required as a cofactor.

Its subcellular location is the cytoplasm. It catalyses the reaction 1-(5-phospho-beta-D-ribosyl)-5'-AMP + H2O = 1-(5-phospho-beta-D-ribosyl)-5-[(5-phospho-beta-D-ribosylamino)methylideneamino]imidazole-4-carboxamide. It participates in amino-acid biosynthesis; L-histidine biosynthesis; L-histidine from 5-phospho-alpha-D-ribose 1-diphosphate: step 3/9. Catalyzes the hydrolysis of the adenine ring of phosphoribosyl-AMP. This chain is Phosphoribosyl-AMP cyclohydrolase, found in Trichlorobacter lovleyi (strain ATCC BAA-1151 / DSM 17278 / SZ) (Geobacter lovleyi).